The chain runs to 496 residues: Flotillin-like protein 3 (496 aa).

Residue C37 is the site of S-palmitoyl cysteine attachment. The stretch at V301–L328 forms a coiled coil.

This sequence belongs to the band 7/mec-2 family. Flotillin subfamily. May be palmitoylated.

It is found in the cell membrane. The protein localises to the membrane. Its subcellular location is the caveola. Its function is as follows. May act as a scaffolding protein within caveolar membranes, functionally participating in formation of caveolae or caveolae-like vesicles. The chain is Flotillin-like protein 3 (FLOT3) from Oryza sativa subsp. japonica (Rice).